The sequence spans 509 residues: ATP synthase subunit alpha (509 aa).

Residue 169–176 participates in ATP binding; that stretch reads GDRQTGKT.

It belongs to the ATPase alpha/beta chains family. F-type ATPases have 2 components, CF(1) - the catalytic core - and CF(0) - the membrane proton channel. CF(1) has five subunits: alpha(3), beta(3), gamma(1), delta(1), epsilon(1). CF(0) has four main subunits: a(1), b(1), b'(1) and c(9-12).

It localises to the cellular chromatophore membrane. It catalyses the reaction ATP + H2O + 4 H(+)(in) = ADP + phosphate + 5 H(+)(out). Its function is as follows. Produces ATP from ADP in the presence of a proton gradient across the membrane. The alpha chain is a regulatory subunit. The sequence is that of ATP synthase subunit alpha from Rhodobacter capsulatus (Rhodopseudomonas capsulata).